The sequence spans 225 residues: CRISPR pre-crRNA endoribonuclease Cas5d (225 aa).

It belongs to the CRISPR-associated protein Cas5 family. Subtype I-C/Dvulg subfamily. It depends on Does not require a metal cofactor. as a cofactor.

Its function is as follows. CRISPR (clustered regularly interspaced short palindromic repeat) is an adaptive immune system that provides protection against mobile genetic elements (viruses, transposable elements and conjugative plasmids). CRISPR clusters contain spacers, sequences complementary to antecedent mobile elements, and target invading nucleic acids. CRISPR clusters are transcribed and processed into CRISPR RNA (crRNA). This protein is a sequence-specific endonuclease that cleaves pre-crRNA at G21 into mature crRNA. Does not cleave pre-crRNA associated with the T.thermophilus strain HB27 Cas5 protein (AC Q746C2) CRISPR locus. The reaction mechanism may proceed by an intramolecular attack of the 2'-hydroxyl group of G21 on the scissile phosphodiester, cutting the precursor 3' to G21 residue yielding 5'-hydroxyl and 2' and/or 3' ends lacking a hydroxyl group (perhaps a 2'/3' cyclic phosphodiester). In Mannheimia succiniciproducens (strain KCTC 0769BP / MBEL55E), this protein is CRISPR pre-crRNA endoribonuclease Cas5d.